A 790-amino-acid polypeptide reads, in one-letter code: MSCKRSYHRHCALVYYMVLLDLTNAVFEFSHPLIRDSGNSQSRQLLHHRLKRSWVWNQFFVLEEYTGTEPLYVGKLHSDMDKGEGSITYILSGDGAGTMFTIDETTGDIHAIQRLDREERSQYTLKAQALDRRTTRPMEPESEFIVKIQDINDNEPKFLDGPYTASVPEMSPVGTSIIQVSATDADDPTYGSSARVVYSILQGQPYFSVDSKTGIIRTALTNMDRESRDYYEVIIQAKDMGGQLGGLAGTTTVNVTLSDVNDNPPRFPQKHYQMSVLESLLINSTVGRVLAMDLDEGVNAEMKYNIIDGDEFEVFDIVTDPSNQVGVITVKKPLDFETKKSYTLKIEGSNAHLEIRFLNLGPFRDTTSVHITVEDVDEPPVFGSSFYFVEVSENVDIGTTIQIVSAKDPDATNNSVRYSIDRSSDPGRYFYVDVTTGALMTARPLDREEVSWHNITILAMEMNNPAQIGGVPVTIKVLDVNDNAPTFTKFSETLMCENAKADQLIQTVSAVDQDDPQEGQHISYSLAPDAANNPNFTLRDNQDNTAWILTRRPGFKQSEQSTFYLPLLISDNGNPRLSSTGTLTIQVCSCDKDGDIMSCNAEPYTLPISLSRGALIAILTCIFVLLVLVLLILSMRRHRKQPYTIDEEDNVHENIVRYDDEGGGEEDTEAFDIAALWNPREAHMGKTRQDMKPEIESLSRYVTQTCRMDNNVHSYMLAKLYEADTDVCAPPFDSLQTYMFEGEGSVAHSLSSLQSLSTDSEQSYDYLSDWGPRFKKLAEMYGTKDNNGSL.

The signal sequence occupies residues 1–25 (MSCKRSYHRHCALVYYMVLLDLTNA). A propeptide spanning residues 26–52 (VFEFSHPLIRDSGNSQSRQLLHHRLKR) is cleaved from the precursor. Residues 26 to 612 (VFEFSHPLIR…PYTLPISLSR (587 aa)) lie on the Extracellular side of the membrane. Cadherin domains are found at residues 54–158 (WVWN…EPKF), 159–267 (LDGP…PPRF), 268–382 (PQKH…PPVF), 383–487 (GSSF…APTF), and 487–605 (FTKF…EPYT). N-linked (GlcNAc...) asparagine glycosylation is found at N254, N283, N413, N454, and N535. A helical transmembrane segment spans residues 613 to 633 (GALIAILTCIFVLLVLVLLIL). Residues 634-790 (SMRRHRKQPY…YGTKDNNGSL (157 aa)) lie on the Cytoplasmic side of the membrane.

As to expression, detected in embryonic posterior neural plate, embryonic neural tube, sulcus limitans and embryonic kidney.

It is found in the cell membrane. Its function is as follows. Cadherins are calcium-dependent cell adhesion proteins. They preferentially interact with themselves in a homophilic manner in connecting cells; cadherins may thus contribute to the sorting of heterogeneous cell types. The polypeptide is Cadherin-20 (cdh20) (Xenopus laevis (African clawed frog)).